A 602-amino-acid polypeptide reads, in one-letter code: Probable translation initiation factor IF-2 (602 aa).

The region spanning 9–229 is the tr-type G domain; it reads LRQPIVVVLG…GLTQNYMKNK (221 aa). A G1 region spans residues 18–25; sequence GHVDHGKT. GTP is bound at residue 18-25; it reads GHVDHGKT. A G2 region spans residues 43–47; that stretch reads EMTQE. The tract at residues 82–85 is G3; sequence DTPG. GTP is bound by residues 82–86 and 136–139; these read DTPGH and NKID. Residues 136-139 are G4; the sequence is NKID. The segment at 204–206 is G5; the sequence is SAK.

It belongs to the TRAFAC class translation factor GTPase superfamily. Classic translation factor GTPase family. IF-2 subfamily.

Its function is as follows. Function in general translation initiation by promoting the binding of the formylmethionine-tRNA to ribosomes. Seems to function along with eIF-2. This chain is Probable translation initiation factor IF-2 (infB), found in Sulfolobus acidocaldarius (strain ATCC 33909 / DSM 639 / JCM 8929 / NBRC 15157 / NCIMB 11770).